Reading from the N-terminus, the 139-residue chain is MAVERTFSMIKPEGVRRGLVGAILARLEQKGYRIVALKMLRLTPEMAAAHYAEHRDKPFYQDLINHITSGPVVAMVLEGPGVIAGLRRLMGATNPQEAAPGTIRGDFALETSDNVIHGADSPASAEREIALYFTPAELG.

Lys-11, Phe-59, Arg-87, Thr-93, Arg-104, and Asn-114 together coordinate ATP. His-117 serves as the catalytic Pros-phosphohistidine intermediate.

This sequence belongs to the NDK family. As to quaternary structure, homotetramer. The cofactor is Mg(2+).

Its subcellular location is the cytoplasm. It carries out the reaction a 2'-deoxyribonucleoside 5'-diphosphate + ATP = a 2'-deoxyribonucleoside 5'-triphosphate + ADP. It catalyses the reaction a ribonucleoside 5'-diphosphate + ATP = a ribonucleoside 5'-triphosphate + ADP. In terms of biological role, major role in the synthesis of nucleoside triphosphates other than ATP. The ATP gamma phosphate is transferred to the NDP beta phosphate via a ping-pong mechanism, using a phosphorylated active-site intermediate. The polypeptide is Nucleoside diphosphate kinase (Moorella thermoacetica (strain ATCC 39073 / JCM 9320)).